The following is a 292-amino-acid chain: 4-hydroxy-tetrahydrodipicolinate synthase (292 aa).

Pyruvate is bound at residue Thr-46. Catalysis depends on Tyr-134, which acts as the Proton donor/acceptor. The Schiff-base intermediate with substrate role is filled by Lys-162. A pyruvate-binding site is contributed by Ile-204.

Belongs to the DapA family. Homotetramer; dimer of dimers.

It is found in the cytoplasm. The enzyme catalyses L-aspartate 4-semialdehyde + pyruvate = (2S,4S)-4-hydroxy-2,3,4,5-tetrahydrodipicolinate + H2O + H(+). It participates in amino-acid biosynthesis; L-lysine biosynthesis via DAP pathway; (S)-tetrahydrodipicolinate from L-aspartate: step 3/4. Catalyzes the condensation of (S)-aspartate-beta-semialdehyde [(S)-ASA] and pyruvate to 4-hydroxy-tetrahydrodipicolinate (HTPA). This chain is 4-hydroxy-tetrahydrodipicolinate synthase, found in Moorella thermoacetica (strain ATCC 39073 / JCM 9320).